The sequence spans 274 residues: Pantothenate synthetase (274 aa).

Residue 27–34 (MGALHQGH) coordinates ATP. The Proton donor role is filled by H34. (R)-pantoate is bound at residue Q58. Beta-alanine is bound at residue Q58. 144 to 147 (GKKD) provides a ligand contact to ATP. (R)-pantoate is bound at residue Q150. ATP contacts are provided by residues I173 and 181–184 (LSSR).

The protein belongs to the pantothenate synthetase family. As to quaternary structure, homodimer.

Its subcellular location is the cytoplasm. It catalyses the reaction (R)-pantoate + beta-alanine + ATP = (R)-pantothenate + AMP + diphosphate + H(+). The protein operates within cofactor biosynthesis; (R)-pantothenate biosynthesis; (R)-pantothenate from (R)-pantoate and beta-alanine: step 1/1. In terms of biological role, catalyzes the condensation of pantoate with beta-alanine in an ATP-dependent reaction via a pantoyl-adenylate intermediate. In Sulfurovum sp. (strain NBC37-1), this protein is Pantothenate synthetase.